A 166-amino-acid polypeptide reads, in one-letter code: Keratin, type II cytoskeletal 68 kDa, component IB (166 aa).

One can recognise an IF rod domain in the interval 1–41 (EAKDDLARLLRDYQDAMNVKLALDVEIATYRKLLEGEECRM). Residues 1–41 (EAKDDLARLLRDYQDAMNVKLALDVEIATYRKLLEGEECRM) are coil 2B. A tail region spans residues 42–166 (SGECPSAVSI…FSQSSQRTSR (125 aa)). Residues 122–146 (GFGGGSSGFGSGSGGRSGVSGGGLS) show a composition bias toward gly residues. The tract at residues 122 to 166 (GFGGGSSGFGSGSGGRSGVSGGGLSSGSSRGGSVRFSQSSQRTSR) is disordered. Positions 147-166 (SGSSRGGSVRFSQSSQRTSR) are enriched in low complexity.

The protein belongs to the intermediate filament family. Heterotetramer of two type I and two type II keratins.

This chain is Keratin, type II cytoskeletal 68 kDa, component IB, found in Bos taurus (Bovine).